The following is a 296-amino-acid chain: Nitrogenase iron protein 2 (296 aa).

11–18 (GKGGIGKS) lines the ATP pocket. Cysteine 99 provides a ligand contact to [4Fe-4S] cluster. The residue at position 102 (arginine 102) is an ADP-ribosylarginine; by dinitrogenase reductase ADP-ribosyltransferase. Cysteine 133 is a [4Fe-4S] cluster binding site.

This sequence belongs to the NifH/BchL/ChlL family. In terms of assembly, homodimer. Requires [4Fe-4S] cluster as cofactor. Post-translationally, the reversible ADP-ribosylation of Arg-102 inactivates the nitrogenase reductase and regulates nitrogenase activity.

It carries out the reaction N2 + 8 reduced [2Fe-2S]-[ferredoxin] + 16 ATP + 16 H2O = H2 + 8 oxidized [2Fe-2S]-[ferredoxin] + 2 NH4(+) + 16 ADP + 16 phosphate + 6 H(+). Its function is as follows. The key enzymatic reactions in nitrogen fixation are catalyzed by the nitrogenase complex, which has 2 components: the iron protein and the molybdenum-iron protein. The polypeptide is Nitrogenase iron protein 2 (nifH2) (Azorhizobium caulinodans (strain ATCC 43989 / DSM 5975 / JCM 20966 / LMG 6465 / NBRC 14845 / NCIMB 13405 / ORS 571)).